The sequence spans 331 residues: Putative type II secretion system C-type protein YghF (331 aa).

Residues 44–60 (MFWLMLLIISAKMAHSL) form a helical membrane-spanning segment.

The protein belongs to the GSP C family.

The protein localises to the cell inner membrane. Its function is as follows. Involved in a type II secretion system (T2SS, formerly general secretion pathway, GSP) for the export of folded proteins across the outer membrane. The polypeptide is Putative type II secretion system C-type protein YghF (Escherichia coli (strain K12)).